Consider the following 368-residue polypeptide: Xaa-Pro dipeptidase (368 aa).

Mn(2+)-binding residues include aspartate 223, aspartate 234, histidine 298, glutamate 327, and glutamate 341.

Belongs to the peptidase M24B family. It depends on Mn(2+) as a cofactor.

It localises to the cytoplasm. It carries out the reaction Xaa-L-Pro dipeptide + H2O = an L-alpha-amino acid + L-proline. This Lactobacillus helveticus (Lactobacillus suntoryeus) protein is Xaa-Pro dipeptidase (pepQ).